The chain runs to 474 residues: UDP-N-acetylmuramate--L-alanine ligase (474 aa).

An ATP-binding site is contributed by 115-121 (GTHGKTT).

The protein belongs to the MurCDEF family.

It is found in the cytoplasm. The enzyme catalyses UDP-N-acetyl-alpha-D-muramate + L-alanine + ATP = UDP-N-acetyl-alpha-D-muramoyl-L-alanine + ADP + phosphate + H(+). It functions in the pathway cell wall biogenesis; peptidoglycan biosynthesis. Its function is as follows. Cell wall formation. The polypeptide is UDP-N-acetylmuramate--L-alanine ligase (Novosphingobium aromaticivorans (strain ATCC 700278 / DSM 12444 / CCUG 56034 / CIP 105152 / NBRC 16084 / F199)).